Consider the following 259-residue polypeptide: MINPIAFKLGPLSLHWYAVCILVGLLLAVYLAAKEAPRKKMTSDDIIDFILIAFPLAIIGARIYYVAFEWSYYSQHLSDIFAIWNGGIAIYGGLITGTIVLFVYCYYKVLNPIHFLDIAAPSVMLAQAIGRWGNFFNQEAYGRAVSQLNYLPSFIRQQMFIDGSYRVPTFLYESMWNLIGFVIIMVWRRKPRSLLDGDIISFYLIWYGCGRLVIEGMRTDSLMLLGIRVSQYVSVLLIIIAIVFIFKRHRQKGISYYQE.

A run of 4 helical transmembrane segments spans residues 12-32 (LSLH…VYLA), 46-66 (IIDF…IYYV), 83-103 (IWNG…VLFV), and 109-129 (VLNP…AQAI). R131 provides a ligand contact to a 1,2-diacyl-sn-glycero-3-phospho-(1'-sn-glycerol). 3 helical membrane passes run 167 to 187 (VPTF…IMVW), 194 to 214 (LLDG…RLVI), and 226 to 246 (GIRV…VFIF).

This sequence belongs to the Lgt family.

The protein resides in the cell membrane. It carries out the reaction L-cysteinyl-[prolipoprotein] + a 1,2-diacyl-sn-glycero-3-phospho-(1'-sn-glycerol) = an S-1,2-diacyl-sn-glyceryl-L-cysteinyl-[prolipoprotein] + sn-glycerol 1-phosphate + H(+). It functions in the pathway protein modification; lipoprotein biosynthesis (diacylglyceryl transfer). Functionally, catalyzes the transfer of the diacylglyceryl group from phosphatidylglycerol to the sulfhydryl group of the N-terminal cysteine of a prolipoprotein, the first step in the formation of mature lipoproteins. In Streptococcus equi subsp. zooepidemicus (strain H70), this protein is Phosphatidylglycerol--prolipoprotein diacylglyceryl transferase.